Consider the following 101-residue polypeptide: Large ribosomal subunit protein uL23 (101 aa).

Belongs to the universal ribosomal protein uL23 family. Part of the 50S ribosomal subunit. Contacts protein L29, and trigger factor when it is bound to the ribosome.

Functionally, one of the early assembly proteins it binds 23S rRNA. One of the proteins that surrounds the polypeptide exit tunnel on the outside of the ribosome. Forms the main docking site for trigger factor binding to the ribosome. This chain is Large ribosomal subunit protein uL23, found in Rhodococcus erythropolis (strain PR4 / NBRC 100887).